The primary structure comprises 195 residues: NADH-quinone oxidoreductase subunit B (195 aa).

[4Fe-4S] cluster-binding residues include Cys-74, Cys-75, Cys-139, and Cys-169.

The protein belongs to the complex I 20 kDa subunit family. As to quaternary structure, NDH-1 is composed of 14 different subunits. Subunits NuoB, C, D, E, F, and G constitute the peripheral sector of the complex. [4Fe-4S] cluster serves as cofactor.

The protein localises to the cell inner membrane. It carries out the reaction a quinone + NADH + 5 H(+)(in) = a quinol + NAD(+) + 4 H(+)(out). NDH-1 shuttles electrons from NADH, via FMN and iron-sulfur (Fe-S) centers, to quinones in the respiratory chain. The immediate electron acceptor for the enzyme in this species is believed to be ubiquinone. Couples the redox reaction to proton translocation (for every two electrons transferred, four hydrogen ions are translocated across the cytoplasmic membrane), and thus conserves the redox energy in a proton gradient. The chain is NADH-quinone oxidoreductase subunit B from Methylobacterium sp. (strain 4-46).